The chain runs to 462 residues: SET domain-containing protein SmydA-8, isoform A (462 aa).

Residues Pro55–Thr287 enclose the SET domain.

Belongs to the class V-like SAM-binding methyltransferase superfamily.

The protein is SET domain-containing protein SmydA-8, isoform A of Drosophila melanogaster (Fruit fly).